We begin with the raw amino-acid sequence, 121 residues long: Large ribosomal subunit protein bL20 (121 aa).

Belongs to the bacterial ribosomal protein bL20 family.

In terms of biological role, binds directly to 23S ribosomal RNA and is necessary for the in vitro assembly process of the 50S ribosomal subunit. It is not involved in the protein synthesizing functions of that subunit. This Chlamydia caviae (strain ATCC VR-813 / DSM 19441 / 03DC25 / GPIC) (Chlamydophila caviae) protein is Large ribosomal subunit protein bL20.